The sequence spans 203 residues: Holliday junction branch migration complex subunit RuvA (203 aa).

The segment at 1–64 is domain I; sequence MIGRLRGIIL…EDAQLLYGFN (64 aa). The domain II stretch occupies residues 65-142; sequence NKQERMLFRE…KGLHGDLFTP (78 aa). A flexible linker region spans residues 143 to 154; the sequence is AADLVLTSPNGP. The domain III stretch occupies residues 155–203; sequence TSDDAEQEAVAALVALGYKPQEASRMVSKIAKPDANSETLIREALRAAL.

Belongs to the RuvA family. Homotetramer. Forms an RuvA(8)-RuvB(12)-Holliday junction (HJ) complex. HJ DNA is sandwiched between 2 RuvA tetramers; dsDNA enters through RuvA and exits via RuvB. An RuvB hexamer assembles on each DNA strand where it exits the tetramer. Each RuvB hexamer is contacted by two RuvA subunits (via domain III) on 2 adjacent RuvB subunits; this complex drives branch migration. In the full resolvosome a probable DNA-RuvA(4)-RuvB(12)-RuvC(2) complex forms which resolves the HJ.

It localises to the cytoplasm. Its function is as follows. The RuvA-RuvB-RuvC complex processes Holliday junction (HJ) DNA during genetic recombination and DNA repair, while the RuvA-RuvB complex plays an important role in the rescue of blocked DNA replication forks via replication fork reversal (RFR). RuvA specifically binds to HJ cruciform DNA, conferring on it an open structure. The RuvB hexamer acts as an ATP-dependent pump, pulling dsDNA into and through the RuvAB complex. HJ branch migration allows RuvC to scan DNA until it finds its consensus sequence, where it cleaves and resolves the cruciform DNA. The polypeptide is Holliday junction branch migration complex subunit RuvA (Enterobacter sp. (strain 638)).